A 793-amino-acid polypeptide reads, in one-letter code: DNA mismatch repair protein MutS (793 aa).

589-596 (GPNMSGKS) is a binding site for ATP.

Belongs to the DNA mismatch repair MutS family.

This protein is involved in the repair of mismatches in DNA. It is possible that it carries out the mismatch recognition step. This protein has a weak ATPase activity. The sequence is that of DNA mismatch repair protein MutS from Thermotoga sp. (strain RQ2).